Consider the following 429-residue polypeptide: Zinc-regulated GTPase metalloprotein activator 1 (429 aa).

Residues Gly15–Thr22 carry the psi-PxLVp motif motif. Gly78 to Ser85 is a GTP binding site. Positions 136, 138, and 139 each coordinate Zn(2+). A CXCC motif motif is present at residues Cys136 to Cys139. GTP-binding positions include Cys139–Asn143 and Asn244–Asp247. The 67-residue stretch at Arg362–Leu428 folds into the CobW C-terminal domain.

The protein belongs to the SIMIBI class G3E GTPase family. ZNG1 subfamily.

The catalysed reaction is GTP + H2O = GDP + phosphate + H(+). Functionally, zinc chaperone that directly transfers zinc cofactor to target metalloproteins, thereby activating them. Catalyzes zinc insertion into the active site of methionine aminopeptidase MAP1, which function to cleave the initiator methionine from polypeptides during or after protein translation. Mechanistically, the N-terminal psi-PxLVp motif binds to the C6H2-type zinc finger of inactive form of MAP1. After formation of the docked complex, zinc is transferred from the CXCC motif in the GTPase domain of ZNG1 to the zinc binding site in the peptidase domain of MAP1 in a process requiring GTP hydrolysis. GTP/GDP exchange is required for release of active MAP1. The sequence is that of Zinc-regulated GTPase metalloprotein activator 1 from Saccharomyces cerevisiae (strain ATCC 204508 / S288c) (Baker's yeast).